Reading from the N-terminus, the 166-residue chain is UPF0179 protein Tneu_1978 (166 aa).

The interval 140-166 (PPSPSKSGGATASRDPSRAPPSRPLSK) is disordered. Pro residues predominate over residues 157–166 (RAPPSRPLSK).

It belongs to the UPF0179 family.

The protein is UPF0179 protein Tneu_1978 of Pyrobaculum neutrophilum (strain DSM 2338 / JCM 9278 / NBRC 100436 / V24Sta) (Thermoproteus neutrophilus).